The chain runs to 120 residues: Large ribosomal subunit protein uL18 (120 aa).

This sequence belongs to the universal ribosomal protein uL18 family. Part of the 50S ribosomal subunit; part of the 5S rRNA/L5/L18/L25 subcomplex. Contacts the 5S and 23S rRNAs.

Its function is as follows. This is one of the proteins that bind and probably mediate the attachment of the 5S RNA into the large ribosomal subunit, where it forms part of the central protuberance. In Lawsonia intracellularis (strain PHE/MN1-00), this protein is Large ribosomal subunit protein uL18.